Consider the following 1170-residue polypeptide: Thrombospondin-1 (1170 aa).

Positions 1-18 (MGLAWGLGVLLLLHACGS) are cleaved as a signal peptide. Residues 47 to 95 (RLVKGPDPSSPAFRIEDANLIPPVPDKKFQDLVDAVRAEKGFLLLASLR) form a heparin-binding region. The Laminin G-like domain occupies 65–270 (NLIPPVPDKK…HKTKDLQAIC (206 aa)). Cys-171 and Cys-232 are disulfide-bonded. 2 N-linked (GlcNAc...) asparagine glycosylation sites follow: Asn-248 and Asn-360. Residues 316–373 (PLCYHNGVQYRTGDEWTVDSCTECRCQNSVTICKKVSCPIMPCSNATVPDGECCPRCW) enclose the VWFC domain. TSP type-1 domains are found at residues 379–429 (DDGW…QECD), 435–490 (DGGW…DSCP), and 492–547 (NGGW…QDCP). Intrachain disulfides connect Cys-391/Cys-423, Cys-395/Cys-428, Cys-406/Cys-413, Cys-447/Cys-484, Cys-451/Cys-489, Cys-462/Cys-474, Cys-504/Cys-541, Cys-508/Cys-546, Cys-519/Cys-531, Cys-551/Cys-562, Cys-556/Cys-572, Cys-575/Cys-586, Cys-592/Cys-608, Cys-599/Cys-617, Cys-620/Cys-644, Cys-650/Cys-663, Cys-657/Cys-676, Cys-678/Cys-689, Cys-705/Cys-713, Cys-718/Cys-738, Cys-754/Cys-774, Cys-777/Cys-797, Cys-813/Cys-833, Cys-836/Cys-856, Cys-874/Cys-894, Cys-910/Cys-930, and Cys-946/Cys-1167. Residues 547-587 (PIDGCLSNPCFAGVQCTSYPDGSWKCGACPPGYSGDGVECK) enclose the EGF-like 1 domain. O-linked (Xyl) serine glycosylation occurs at Ser-553. One can recognise an EGF-like 2 domain in the interval 646–690 (PRNPCTDGTHDCNKNAKCNYLGHYSDPMYRCECKPGYAGNGIICG). TSP type-3 repeat units follow at residues 691-726 (EDTD…NSGQ), 727-762 (EDYD…NPAQ), 763-785 (YDYD…NPDQ), 786-821 (ADTD…NVDQ), 822-844 (KDTD…NPDQ), 845-882 (LDSD…NANQ), 883-918 (ADHD…NPDQ), and 919-954 (KDSD…DISE). A glycan (N-linked (GlcNAc...) asparagine) is linked at Asn-708. The disordered stretch occupies residues 839–944 (EHNPDQLDSD…DQDKVPDIDD (106 aa)). Composition is skewed to basic and acidic residues over residues 840 to 854 (HNPD…RIGD), 883 to 894 (ADHDKDGKGDAC), and 917 to 941 (DQKD…KVPD). The short motif at 926–928 (RGD) is the Cell attachment site element. A TSP C-terminal domain is found at 958–1170 (RRFQMIPLDP…SDLKYECRDS (213 aa)). Asn-1067 and Asn-1085 each carry an N-linked (GlcNAc...) asparagine glycan.

Belongs to the thrombospondin family. As to quaternary structure, homotrimer; disulfide-linked. Can bind to fibrinogen, fibronectin, laminin, type V collagen and integrins alpha-V/beta-1, alpha-V/beta-3 and alpha-IIb/beta-3. Binds heparin. Interacts (via the C-terminal domain) with CD47. Interacts (via the TSP type I repeats) with CD36; the interaction conveys an antiangiogenic effect. Interacts (via the TSP type I repeats) with HRG; the interaction blocks the antiangiogenic effect of THBS1 with CD36. Interacts with ATF6 (via lumenal domain). Interacts with FN1; this interaction is enhanced by TNFAIP6, which may act as a bridging molecule between FN1 and THBS1. Interacts with SIRPA; the interaction stimulates phosphorylation of SIRPA. As to expression, odontoblasts.

Its subcellular location is the secreted. It is found in the cell surface. The protein resides in the extracellular space. The protein localises to the extracellular matrix. It localises to the endoplasmic reticulum. Its subcellular location is the sarcoplasmic reticulum. Adhesive glycoprotein that mediates cell-to-cell and cell-to-matrix interactions. Multifunctional, involved in inflammation, angiogenesis, wound healing, reactive oxygen species (ROS) signaling, nitrous oxide (NO) signaling, apoptosis, senescence, aging, cellular self-renewal, stemness, and cardiovascular and metabolic homeostasis. Negatively modulates dendritic cell activation and cytokine release, as part of an autocrine feedback loop, contributing to the resolution of inflammation and immune homeostasis. Ligand for receptor CD47. Modulates nitrous oxide (NO) signaling via CD47, hence playing a role as a pressor agent, supporting blood pressure. Plays a role in endothelial cell senescence, acting via CD47, by increasing the abundance and activation of NADPH oxidase NOX1, and so generating excess ROS. Inhibits stem cell self-renewal, acting via CD47 signaling, probably by regulation of the stem cell transcription factors POU5F1/OCT4, SOX2, MYC/c-Myc and KLF4. Negatively modulates wound healing, acting via CD47. Ligand for receptor CD36. Involved in inducing apoptosis in podocytes in response to elevated free fatty acids, acting via CD36. Plays a role in suppressing angiogenesis, acting, depending on context, via CD36 or CD47. Promotes cellular senescence in a TP53-CDKN1A-RB1 signaling-dependent manner. Ligand for immunoglobulin-like cell surface receptor SIRPA. Involved in ROS signaling in non-phagocytic cells, stimulating NADPH oxidase-derived ROS production, acting via interaction with SIRPA. Plays a role in metabolic dysfunction in diet-induced obesity, perhaps acting by exacerbating adipose inflammatory activity; its effects may be mediated, at least in part, through enhanced adipocyte proliferation. Plays a role in ER stress response, via its interaction with the activating transcription factor 6 alpha (ATF6) which produces adaptive ER stress response factors. May be involved in age-related conditions, including metabolic dysregulation, during normal aging. This Bos taurus (Bovine) protein is Thrombospondin-1 (THBS1).